The sequence spans 834 residues: MGPRARTVCFLFFLLWVLAELAENSDFHLPGDYLLGGLFTLHANMKGIVHLNFLQVPMCKEYEMKVSGYNLMQAMRFAVEEINNDSSLLPDVLLGYEMVDVCYISNNVQPALYFLAQEDNLLPIQEDYSNYVPRVVAVIGPENSESVMTVAHFLSLFLLPQITYSAISDQLQDKQRFPALLRTTPSAKHHIEAMVQLMLHFHWNWISVLVSSDTYGRDNGQMLGDRLAGGDICIAFQETLPTLQSNQDIMPEDHQRLVSIVEKLQQSTARVVVVFSPDLSLYNFFREVLRQNFTGAVWIASESWAIDPVLHNLTGLHRTGTFLGITIQNVPIPGFSEFRVRGPQAGPTNQRSTCNQECDTCLNSTLSFNTVLRLSGERIVYSVYSAVYAVAHALHSLLGCDHSTCTKRVVYPWQLVQEIWKVNFTLLDHQIFFDPQGDVALHLEIVQWQWDLSQNPFQSIASYNPLQGRLKHIQDISWHTINNTIPVSMCSKRCQSGQKKKPVGIHTCCFECIDCLPGTFLNQTEDEYDCQACPSNEWSHQSETSCFKRRLSFLEWHEAATIAVALLAALGFLXXXXXXXXXXXXXXXPMVRSAGGPMCFLMLTLLLVAYMVVPVYVGPPKVTTCLCRQALFPVCFTICISCITMRSFQIVCVFKMASRFPRAYSYWVRYQGSYVSVAFITALKVVTVVISLLATGLNPTTRADTDDPKIMIISCNPNYRNSLLFNTSLDLLLSVVGFSFAYMGKELPTNYNEAKFITFSMTFYFTSSVSLCTFMSVYDGVLVTIVDLLVTVFNLLAISLGYFGPKCYMILFYPERNTPAYFNSMIQGYTMRRD.

The N-terminal stretch at 1 to 19 (MGPRARTVCFLFFLLWVLA) is a signal peptide. Over 20–561 (ELAENSDFHL…SFLEWHEAAT (542 aa)) the chain is Extracellular. Asn84, Asn292, Asn312, Asn363, Asn423, Asn482, and Asn522 each carry an N-linked (GlcNAc...) asparagine glycan. The helical transmembrane segment at 562–582 (IAVALLAALGFLXXXXXXXXX) threads the bilayer. Residues 583–597 (XXXXXXPMVRSAGGP) are Cytoplasmic-facing. A helical transmembrane segment spans residues 598-618 (MCFLMLTLLLVAYMVVPVYVG). The Extracellular portion of the chain corresponds to 619–630 (PPKVTTCLCRQA). Residues 631 to 651 (LFPVCFTICISCITMRSFQIV) traverse the membrane as a helical segment. At 652-676 (CVFKMASRFPRAYSYWVRYQGSYVS) the chain is on the cytoplasmic side. A helical transmembrane segment spans residues 677–697 (VAFITALKVVTVVISLLATGL). At 698-722 (NPTTRADTDDPKIMIISCNPNYRNS) the chain is on the extracellular side. Residues 723-743 (LLFNTSLDLLLSVVGFSFAYM) traverse the membrane as a helical segment. At 744–755 (GKELPTNYNEAK) the chain is on the cytoplasmic side. The chain crosses the membrane as a helical span at residues 756-776 (FITFSMTFYFTSSVSLCTFMS). Residues 777 to 779 (VYD) lie on the Extracellular side of the membrane. Residues 780–800 (GVLVTIVDLLVTVFNLLAISL) form a helical membrane-spanning segment. At 801–834 (GYFGPKCYMILFYPERNTPAYFNSMIQGYTMRRD) the chain is on the cytoplasmic side.

The protein belongs to the G-protein coupled receptor 3 family. TAS1R subfamily. In terms of assembly, forms heterodimers with TAS1R3.

The protein localises to the cell membrane. Functionally, putative taste receptor. TAS1R2/TAS1R3 recognizes diverse natural and synthetic sweeteners. This is Taste receptor type 1 member 2 (TAS1R2) from Cebuella pygmaea (Pygmy marmoset).